Consider the following 556-residue polypeptide: 2-succinyl-5-enolpyruvyl-6-hydroxy-3-cyclohexene-1-carboxylate synthase (556 aa).

This sequence belongs to the TPP enzyme family. MenD subfamily. As to quaternary structure, homodimer. It depends on Mg(2+) as a cofactor. Mn(2+) is required as a cofactor. The cofactor is thiamine diphosphate.

It carries out the reaction isochorismate + 2-oxoglutarate + H(+) = 5-enolpyruvoyl-6-hydroxy-2-succinyl-cyclohex-3-ene-1-carboxylate + CO2. It functions in the pathway quinol/quinone metabolism; 1,4-dihydroxy-2-naphthoate biosynthesis; 1,4-dihydroxy-2-naphthoate from chorismate: step 2/7. Its pathway is quinol/quinone metabolism; menaquinone biosynthesis. Functionally, catalyzes the thiamine diphosphate-dependent decarboxylation of 2-oxoglutarate and the subsequent addition of the resulting succinic semialdehyde-thiamine pyrophosphate anion to isochorismate to yield 2-succinyl-5-enolpyruvyl-6-hydroxy-3-cyclohexene-1-carboxylate (SEPHCHC). This is 2-succinyl-5-enolpyruvyl-6-hydroxy-3-cyclohexene-1-carboxylate synthase from Escherichia coli (strain K12 / MC4100 / BW2952).